A 135-amino-acid chain; its full sequence is Nucleoside diphosphate kinase (135 aa).

Residues Lys10, Phe58, Arg86, Thr92, Arg103, and Asn113 each coordinate ATP. Residue His116 is the Pros-phosphohistidine intermediate of the active site.

Belongs to the NDK family. Homotetramer. Mg(2+) serves as cofactor.

It localises to the cytoplasm. It carries out the reaction a 2'-deoxyribonucleoside 5'-diphosphate + ATP = a 2'-deoxyribonucleoside 5'-triphosphate + ADP. The enzyme catalyses a ribonucleoside 5'-diphosphate + ATP = a ribonucleoside 5'-triphosphate + ADP. Its function is as follows. Major role in the synthesis of nucleoside triphosphates other than ATP. The ATP gamma phosphate is transferred to the NDP beta phosphate via a ping-pong mechanism, using a phosphorylated active-site intermediate. This Nocardioides sp. (strain ATCC BAA-499 / JS614) protein is Nucleoside diphosphate kinase.